Here is a 90-residue protein sequence, read N- to C-terminus: UPF0298 protein BLi01717/BL02989 (90 aa).

Belongs to the UPF0298 family.

Its subcellular location is the cytoplasm. This is UPF0298 protein BLi01717/BL02989 from Bacillus licheniformis (strain ATCC 14580 / DSM 13 / JCM 2505 / CCUG 7422 / NBRC 12200 / NCIMB 9375 / NCTC 10341 / NRRL NRS-1264 / Gibson 46).